Reading from the N-terminus, the 564-residue chain is Dihydroxy-acid dehydratase (564 aa).

Cys53 provides a ligand contact to [2Fe-2S] cluster. Asp85 contributes to the Mg(2+) binding site. Position 126 (Cys126) interacts with [2Fe-2S] cluster. Mg(2+)-binding residues include Asp127 and Lys128. Lys128 bears the N6-carboxylysine mark. Residue Cys203 coordinates [2Fe-2S] cluster. Residue Glu454 participates in Mg(2+) binding. The active-site Proton acceptor is the Ser480.

Belongs to the IlvD/Edd family. As to quaternary structure, homodimer. Requires [2Fe-2S] cluster as cofactor. Mg(2+) serves as cofactor.

The catalysed reaction is (2R)-2,3-dihydroxy-3-methylbutanoate = 3-methyl-2-oxobutanoate + H2O. It catalyses the reaction (2R,3R)-2,3-dihydroxy-3-methylpentanoate = (S)-3-methyl-2-oxopentanoate + H2O. It participates in amino-acid biosynthesis; L-isoleucine biosynthesis; L-isoleucine from 2-oxobutanoate: step 3/4. Its pathway is amino-acid biosynthesis; L-valine biosynthesis; L-valine from pyruvate: step 3/4. Functions in the biosynthesis of branched-chain amino acids. Catalyzes the dehydration of (2R,3R)-2,3-dihydroxy-3-methylpentanoate (2,3-dihydroxy-3-methylvalerate) into 2-oxo-3-methylpentanoate (2-oxo-3-methylvalerate) and of (2R)-2,3-dihydroxy-3-methylbutanoate (2,3-dihydroxyisovalerate) into 2-oxo-3-methylbutanoate (2-oxoisovalerate), the penultimate precursor to L-isoleucine and L-valine, respectively. The chain is Dihydroxy-acid dehydratase from Leifsonia xyli subsp. xyli (strain CTCB07).